The following is a 130-amino-acid chain: Small ribosomal subunit protein uS8 (130 aa).

The protein belongs to the universal ribosomal protein uS8 family. As to quaternary structure, part of the 30S ribosomal subunit. Contacts proteins S5 and S12.

In terms of biological role, one of the primary rRNA binding proteins, it binds directly to 16S rRNA central domain where it helps coordinate assembly of the platform of the 30S subunit. The protein is Small ribosomal subunit protein uS8 of Hahella chejuensis (strain KCTC 2396).